Here is a 313-residue protein sequence, read N- to C-terminus: VVVITGASSGLGLAAAKALAETGKWHVVMACRDFLKASKAAKAAGMADGSYTVMHLDLASLDSVRQFVDAFRRAEMPLDVLVCNAAIYRPTARKPTFTAEGVEMSVGVNHLGHFLLARLLLEDLQKSDYPSRRLVIVGSITGNDNTLAGNVPPKANLGDLRGLAGGLTGASGSAMIDGDESFDGAKAYKDSKVCNMLTMQEFHRRYHEDTGITFSSLYPGCIATTGLFREHIPLFRTLFPPFQKFVTKGFVSEAESGKRLAQVVGEPSLTKSGVYWSWNKDSASFENQLSQEASDPEKARKVWELSEKLVGLA.

The protein belongs to the short-chain dehydrogenases/reductases (SDR) family. POR subfamily.

The protein resides in the plastid. The protein localises to the chloroplast. It carries out the reaction chlorophyllide a + NADP(+) = protochlorophyllide a + NADPH + H(+). Its pathway is porphyrin-containing compound metabolism; chlorophyll biosynthesis. Its function is as follows. Phototransformation of protochlorophyllide (Pchlide) to chlorophyllide (Chlide). The sequence is that of Protochlorophyllide reductase from Avena sativa (Oat).